The following is a 353-amino-acid chain: UPF0421 protein YgaE (353 aa).

4 helical membrane-spanning segments follow: residues 20-40 (LASWIGLPAPIFAGIAAIFAI), 67-87 (VFGLIFGPSPIMIGLTAVIVI), 103-123 (LVTVIAILESAGDDFLMFALI), and 125-145 (TSTVILGVLSSFIVNLVFLPP).

The protein belongs to the UPF0421 family.

It localises to the cell membrane. The polypeptide is UPF0421 protein YgaE (ygaE) (Bacillus subtilis (strain 168)).